The primary structure comprises 344 residues: Dihydroorotate dehydrogenase (quinone) (344 aa).

FMN is bound by residues 62–66 (AGLDK) and Thr86. Lys66 lines the substrate pocket. 111–115 (NRMGF) lines the substrate pocket. Residues Asn139 and Asn172 each coordinate FMN. Asn172 is a binding site for substrate. Ser175 serves as the catalytic Nucleophile. Asn177 lines the substrate pocket. Residues Lys217 and Thr245 each coordinate FMN. 246–247 (NT) contacts substrate. Residues Gly268, Gly297, and 318-319 (YS) each bind FMN.

It belongs to the dihydroorotate dehydrogenase family. Type 2 subfamily. As to quaternary structure, monomer. FMN is required as a cofactor.

Its subcellular location is the cell membrane. The catalysed reaction is (S)-dihydroorotate + a quinone = orotate + a quinol. Its pathway is pyrimidine metabolism; UMP biosynthesis via de novo pathway; orotate from (S)-dihydroorotate (quinone route): step 1/1. Functionally, catalyzes the conversion of dihydroorotate to orotate with quinone as electron acceptor. This is Dihydroorotate dehydrogenase (quinone) from Chromobacterium violaceum (strain ATCC 12472 / DSM 30191 / JCM 1249 / CCUG 213 / NBRC 12614 / NCIMB 9131 / NCTC 9757 / MK).